A 388-amino-acid chain; its full sequence is Mannitol-1-phosphate 5-dehydrogenase (388 aa).

5-16 (AVHFGGGNIGRG) is a binding site for NAD(+). Residue Lys-213 is part of the active site.

The protein belongs to the mannitol dehydrogenase family. As to quaternary structure, monomer.

The catalysed reaction is D-mannitol 1-phosphate + NAD(+) = beta-D-fructose 6-phosphate + NADH + H(+). In terms of biological role, catalyzes the NAD(H)-dependent interconversion of D-fructose 6-phosphate and D-mannitol 1-phosphate in the mannitol metabolic pathway. This chain is Mannitol-1-phosphate 5-dehydrogenase, found in Ajellomyces capsulatus (strain NAm1 / WU24) (Darling's disease fungus).